A 300-amino-acid chain; its full sequence is Mitochondrial GTP/GDP carrier protein 1 (300 aa).

3 Solcar repeats span residues 8–108, 117–198, and 208–293; these read QSGL…KKDF, GKAM…AKEY, and ATWS…LIPR. Helical transmembrane passes span 14 to 34, 85 to 101, 122 to 142, 173 to 189, 214 to 234, and 268 to 285; these read LLGSASAGIMEIAVFHPVDTI, QRVYKYGGQPFANEFLN, SAAAGSLIGIGEIVLLPLDVL, GWGWTAARNAPGSFALF, FISSIVGACSSLIVSAPLDVI, and GLTPKLLTTGPKLVFSFA.

This sequence belongs to the mitochondrial carrier (TC 2.A.29) family.

The protein localises to the mitochondrion inner membrane. Functionally, mitochondrial GTP/GDP transporter required for GTP uptake and GDP exit from mitochondria. Involved in mitochondrial iron transport and essential for mitochondrial genome maintenance. This chain is Mitochondrial GTP/GDP carrier protein 1 (GGC1), found in Saccharomyces cerevisiae (strain ATCC 204508 / S288c) (Baker's yeast).